A 168-amino-acid polypeptide reads, in one-letter code: uncharacterized protein (168 aa).

Helical transmembrane passes span 27–47 (NWLV…RISG) and 147–167 (IENG…QVMF).

It localises to the membrane. This is an uncharacterized protein from Saccharomyces cerevisiae (strain ATCC 204508 / S288c) (Baker's yeast).